Here is a 33-residue protein sequence, read N- to C-terminus: Brevinin-2PTd (33 aa).

Cysteine 27 and cysteine 33 are disulfide-bonded.

Expressed by the skin glands.

It localises to the secreted. Has antibacterial activity against the Gram-positive bacterium S.aureus ATCC 25923 and the Gram-negative bacterium E.coli ATCC 25726. In Pulchrana picturata (Malaysian fire frog), this protein is Brevinin-2PTd.